Reading from the N-terminus, the 371-residue chain is RNA polymerase sigma factor SigA (371 aa).

A sigma-70 factor domain-2 region spans residues 137-207 (LAEANLRLVV…TRAIADQART (71 aa)). Positions 161 to 164 (DLIQ) match the Interaction with polymerase core subunit RpoC motif. A sigma-70 factor domain-3 region spans residues 216–292 (ETINKLVREQ…DEVIENPVDY (77 aa)). Residues 305–358 (VLDTLTDREENVLRLRFGLDDGKMRTLEDVGKVFDVTRERIRQIEAKALRKLRH) form a sigma-70 factor domain-4 region. Positions 331–350 (LEDVGKVFDVTRERIRQIEA) form a DNA-binding region, H-T-H motif.

Belongs to the sigma-70 factor family. RpoD/SigA subfamily. Interacts transiently with the RNA polymerase catalytic core.

It localises to the cytoplasm. In terms of biological role, sigma factors are initiation factors that promote the attachment of RNA polymerase to specific initiation sites and are then released. This sigma factor is the primary sigma factor during exponential growth. The polypeptide is RNA polymerase sigma factor SigA (Streptococcus mutans serotype c (strain ATCC 700610 / UA159)).